A 443-amino-acid polypeptide reads, in one-letter code: Thymidine phosphorylase (443 aa).

Belongs to the thymidine/pyrimidine-nucleoside phosphorylase family. As to quaternary structure, homodimer.

The enzyme catalyses thymidine + phosphate = 2-deoxy-alpha-D-ribose 1-phosphate + thymine. The protein operates within pyrimidine metabolism; dTMP biosynthesis via salvage pathway; dTMP from thymine: step 1/2. Functionally, the enzymes which catalyze the reversible phosphorolysis of pyrimidine nucleosides are involved in the degradation of these compounds and in their utilization as carbon and energy sources, or in the rescue of pyrimidine bases for nucleotide synthesis. This is Thymidine phosphorylase from Shewanella sp. (strain ANA-3).